The primary structure comprises 158 residues: 2-C-methyl-D-erythritol 2,4-cyclodiphosphate synthase (158 aa).

2 residues coordinate a divalent metal cation: D9 and H11. Residues 9–11 (DVH) and 35–36 (HS) each bind 4-CDP-2-C-methyl-D-erythritol 2-phosphate. H43 contributes to the a divalent metal cation binding site. Residues 57 to 59 (DIG), 62 to 66 (FPDTD), 101 to 107 (AQAPKMA), 133 to 136 (TTTE), F140, and R143 each bind 4-CDP-2-C-methyl-D-erythritol 2-phosphate.

The protein belongs to the IspF family. As to quaternary structure, homotrimer. A divalent metal cation is required as a cofactor.

It carries out the reaction 4-CDP-2-C-methyl-D-erythritol 2-phosphate = 2-C-methyl-D-erythritol 2,4-cyclic diphosphate + CMP. It functions in the pathway isoprenoid biosynthesis; isopentenyl diphosphate biosynthesis via DXP pathway; isopentenyl diphosphate from 1-deoxy-D-xylulose 5-phosphate: step 4/6. Functionally, involved in the biosynthesis of isopentenyl diphosphate (IPP) and dimethylallyl diphosphate (DMAPP), two major building blocks of isoprenoid compounds. Catalyzes the conversion of 4-diphosphocytidyl-2-C-methyl-D-erythritol 2-phosphate (CDP-ME2P) to 2-C-methyl-D-erythritol 2,4-cyclodiphosphate (ME-CPP) with a corresponding release of cytidine 5-monophosphate (CMP). This chain is 2-C-methyl-D-erythritol 2,4-cyclodiphosphate synthase, found in Vibrio vulnificus (strain CMCP6).